Consider the following 86-residue polypeptide: Putative membrane protein insertion efficiency factor (86 aa).

The protein belongs to the UPF0161 family.

Its subcellular location is the cell inner membrane. Its function is as follows. Could be involved in insertion of integral membrane proteins into the membrane. The sequence is that of Putative membrane protein insertion efficiency factor from Pseudomonas aeruginosa (strain LESB58).